The chain runs to 122 residues: Large ribosomal subunit protein uL18 (122 aa).

Residues 1–19 (MSTLSRKQKTQKRHKRLRR) show a composition bias toward basic residues. Residues 1–26 (MSTLSRKQKTQKRHKRLRRNLSGTDQ) form a disordered region.

Belongs to the universal ribosomal protein uL18 family. Part of the 50S ribosomal subunit; part of the 5S rRNA/L5/L18/L25 subcomplex. Contacts the 5S and 23S rRNAs.

In terms of biological role, this is one of the proteins that bind and probably mediate the attachment of the 5S RNA into the large ribosomal subunit, where it forms part of the central protuberance. This is Large ribosomal subunit protein uL18 from Prochlorococcus marinus (strain SARG / CCMP1375 / SS120).